The sequence spans 195 residues: Calcineurin B homologous protein 1 (195 aa).

G2 is lipidated: N-myristoyl glycine. Positions 2 to 6 (GSRAS) match the Necessary for association with microtubule and interaction with GAPDH motif. 4 EF-hand domains span residues 26 to 61 (SQIT…AINP), 66 to 101 (IINA…KSKD), 110 to 145 (SRSN…MVGV), and 151 to 186 (QLGS…VDVE). Ca(2+) is bound by residues D123, D125, D127, K129, and E134. A Nuclear export signal 1 motif is present at residues 138–147 (VLRMMVGVNI). Ca(2+) is bound by residues D164, D166, D168, and E175. Positions 176–185 (FVKVLEKVDV) match the Nuclear export signal 2 motif.

Belongs to the calcineurin regulatory subunit family. CHP subfamily. In terms of assembly, monomer. Interacts with STK17B; the interaction occurs in a calcium-independent manner and induces the translocation of CHP1 from the Golgi to the nucleus. Interacts with GAPDH; the interaction is direct, occurs in a N-myristoylation-dependent manner and facilitates the ability of CHP1 to bind microtubules. Interacts with KIF1B (via the C-terminal end of the kinesin-motor domain); the interaction occurs in a calcium-dependent manner. Associates (via C-terminal domain) with microtubules; the association occurs with polymerized microtubules during the cell cycle in a myristoylation- and calcium-independent manner and is enhanced by GAPDH. Interacts with PPP3CA. Interacts with SLC9A1/NHE1 (via the cytoplasmic C-terminal domain); the interaction occurs at the plasma membrane in a calcium-dependent manner and at a domain that is critical for growth factor stimulation of the exchanger. Interacts with SLC9A3; increases SLC9A3 trafficking and activity at the plasma membrane. Phosphorylated; decreased phosphorylation is associated with an increase in SLC9A1/NHE1 Na(+)/H(+) exchange activity. Phosphorylation occurs in serum-dependent manner. The phosphorylation state may regulate the binding to SLC9A1/NHE1. Post-translationally, both N-myristoylation and calcium-mediated conformational changes are essential for its function in exocytic traffic. N-myristoylation is required for its association with microtubules and interaction with GAPDH, but not for the constitutive association to membranes.

The protein localises to the nucleus. Its subcellular location is the cytoplasm. It localises to the cytoskeleton. It is found in the endomembrane system. The protein resides in the endoplasmic reticulum-Golgi intermediate compartment. The protein localises to the endoplasmic reticulum. Its subcellular location is the cell membrane. It localises to the membrane. Functionally, calcium-binding protein involved in different processes such as regulation of vesicular trafficking, plasma membrane Na(+)/H(+) exchanger and gene transcription. Involved in the constitutive exocytic membrane traffic. Mediates the association between microtubules and membrane-bound organelles of the endoplasmic reticulum and Golgi apparatus and is also required for the targeting and fusion of transcytotic vesicles (TCV) with the plasma membrane. Functions as an integral cofactor in cell pH regulation by controlling plasma membrane-type Na(+)/H(+) exchange activity. Affects the pH sensitivity of SLC9A1/NHE1 by increasing its sensitivity at acidic pH. Required for the stabilization and localization of SLC9A1/NHE1 at the plasma membrane. Inhibits serum- and GTPase-stimulated Na(+)/H(+) exchange. Plays a role as an inhibitor of ribosomal RNA transcription by repressing the nucleolar UBF1 transcriptional activity. May sequester UBF1 in the nucleoplasm and limit its translocation to the nucleolus. Associates to the ribosomal gene promoter. Acts as a negative regulator of the calcineurin/NFAT signaling pathway. Inhibits NFAT nuclear translocation and transcriptional activity by suppressing the calcium-dependent calcineurin phosphatase activity. Also negatively regulates the kinase activity of the apoptosis-induced kinase STK17B. Inhibits both STK17B auto- and substrate-phosphorylations in a calcium-dependent manner. The protein is Calcineurin B homologous protein 1 (CHP1) of Bos taurus (Bovine).